The chain runs to 444 residues: ATP-dependent protease ATPase subunit HslU (444 aa).

ATP is bound by residues isoleucine 18, 60–65 (GVGKTE), aspartate 256, glutamate 322, and arginine 394.

It belongs to the ClpX chaperone family. HslU subfamily. In terms of assembly, a double ring-shaped homohexamer of HslV is capped on each side by a ring-shaped HslU homohexamer. The assembly of the HslU/HslV complex is dependent on binding of ATP.

It is found in the cytoplasm. ATPase subunit of a proteasome-like degradation complex; this subunit has chaperone activity. The binding of ATP and its subsequent hydrolysis by HslU are essential for unfolding of protein substrates subsequently hydrolyzed by HslV. HslU recognizes the N-terminal part of its protein substrates and unfolds these before they are guided to HslV for hydrolysis. This chain is ATP-dependent protease ATPase subunit HslU, found in Klebsiella pneumoniae (strain 342).